Reading from the N-terminus, the 1847-residue chain is Cilia- and flagella-associated protein 65 (1847 aa).

A helical membrane pass occupies residues phenylalanine 112 to isoleucine 132. The region spanning aspartate 805–methionine 914 is the MSP domain. The stretch at glutamine 1457–threonine 1483 forms a coiled coil. Residues tyrosine 1668 to lysine 1721 are disordered. Acidic residues predominate over residues glutamine 1688–aspartate 1720.

This sequence belongs to the CFAP65 family. As to quaternary structure, interacts with CFAP47. Predominantly expressed in testis. Highly expressed in round and elongating spermatids. Expressed also in certain ciliated organs, such as the brain, lung and kidney.

It is found in the cell projection. The protein resides in the cilium. It localises to the flagellum membrane. Its subcellular location is the cytoplasmic vesicle. The protein localises to the secretory vesicle. It is found in the acrosome membrane. The protein resides in the cytoplasm. Plays a role in flagellar formation and sperm motility. In Mus musculus (Mouse), this protein is Cilia- and flagella-associated protein 65.